The sequence spans 739 residues: Probable endo-1,3(4)-beta-glucanase An02g00850 (739 aa).

An N-terminal signal peptide occupies residues 1–24 (MPTSTLLWSVGSLALSSMVLPAAA). The region spanning 31 to 283 (ETWKGEDFLT…WAGGVYSTSG (253 aa)) is the GH16 domain. N-linked (GlcNAc...) asparagine glycans are attached at residues N59 and N74. E140 (nucleophile) is an active-site residue. The active-site Proton donor is the E145. N396 carries N-linked (GlcNAc...) asparagine glycosylation. Composition is skewed to low complexity over residues 431–442 (SEATEASNSEGS), 452–499 (TGAS…AGAT), and 507–522 (GASG…SAAA). Positions 431 to 718 (SEATEASNSE…TPSTPVFTGG (288 aa)) are disordered. N-linked (GlcNAc...) asparagine glycans are attached at residues N459 and N482. Residues 523-532 (TPSNVSSTGA) are compositionally biased toward polar residues. N-linked (GlcNAc...) asparagine glycosylation is found at N526 and N537. Residues 539-548 (SEDSSASSEA) are compositionally biased toward polar residues. A compositionally biased stretch (low complexity) spans 561–587 (GASAEANGNDSASSNAATASNVSGASA). N569, N581, N592, and N620 each carry an N-linked (GlcNAc...) asparagine glycan. Low complexity predominate over residues 597 to 641 (ASAGANAGSSAAPSSVSGASAEANGSEGSSSHSSGSQAGAHSYGS). The segment covering 654-673 (PSSSSHAFATAPSSTGSSRV) has biased composition (polar residues). The span at 674–713 (PTSAAAANNAAAATQGSSASGSNSGSSGHGSSSATTPSTP) shows a compositional bias: low complexity. G717 is lipidated: GPI-anchor amidated glycine. Positions 718–739 (GANKLTLGASSVLSVLAFALLA) are cleaved as a propeptide — removed in mature form.

The protein belongs to the glycosyl hydrolase 16 family.

Its subcellular location is the cell membrane. It carries out the reaction Endohydrolysis of (1-&gt;3)- or (1-&gt;4)-linkages in beta-D-glucans when the glucose residue whose reducing group is involved in the linkage to be hydrolyzed is itself substituted at C-3.. Its function is as follows. Mixed-linked glucanase involved in the degradation of complex natural cellulosic substrates. The protein is Probable endo-1,3(4)-beta-glucanase An02g00850 of Aspergillus niger (strain ATCC MYA-4892 / CBS 513.88 / FGSC A1513).